We begin with the raw amino-acid sequence, 127 residues long: Fluoride-specific ion channel FluC (127 aa).

A run of 4 helical transmembrane segments spans residues 7–27 (LLVA…GAWV), 31–51 (LGAG…FLIG), 68–88 (LFLA…SYET), and 97–117 (VGKA…LAFL). Positions 76 and 79 each coordinate Na(+).

It belongs to the fluoride channel Fluc/FEX (TC 1.A.43) family.

The protein localises to the cell inner membrane. The enzyme catalyses fluoride(in) = fluoride(out). With respect to regulation, na(+) is not transported, but it plays an essential structural role and its presence is essential for fluoride channel function. Fluoride-specific ion channel. Important for reducing fluoride concentration in the cell, thus reducing its toxicity. In Thermus thermophilus (strain ATCC BAA-163 / DSM 7039 / HB27), this protein is Fluoride-specific ion channel FluC.